A 55-amino-acid chain; its full sequence is MPQLNPAPWFSIMVMTWLTLALLIQPKLLTFTTTNPPSKKPSLITKPTPWAWPWT.

A helical membrane pass occupies residues 8–24; the sequence is PWFSIMVMTWLTLALLI. A disordered region spans residues 35 to 55; it reads NPPSKKPSLITKPTPWAWPWT.

It belongs to the ATPase protein 8 family. In terms of assembly, component of the ATP synthase complex composed at least of ATP5F1A/subunit alpha, ATP5F1B/subunit beta, ATP5MC1/subunit c (homooctomer), MT-ATP6/subunit a, MT-ATP8/subunit 8, ATP5ME/subunit e, ATP5MF/subunit f, ATP5MG/subunit g, ATP5MK/subunit k, ATP5MJ/subunit j, ATP5F1C/subunit gamma, ATP5F1D/subunit delta, ATP5F1E/subunit epsilon, ATP5PF/subunit F6, ATP5PB/subunit b, ATP5PD/subunit d, ATP5PO/subunit OSCP. ATP synthase complex consists of a soluble F(1) head domain (subunits alpha(3) and beta(3)) - the catalytic core - and a membrane F(0) domain - the membrane proton channel (subunits c, a, 8, e, f, g, k and j). These two domains are linked by a central stalk (subunits gamma, delta, and epsilon) rotating inside the F1 region and a stationary peripheral stalk (subunits F6, b, d, and OSCP).

The protein resides in the mitochondrion membrane. Its function is as follows. Subunit 8, of the mitochondrial membrane ATP synthase complex (F(1)F(0) ATP synthase or Complex V) that produces ATP from ADP in the presence of a proton gradient across the membrane which is generated by electron transport complexes of the respiratory chain. ATP synthase complex consist of a soluble F(1) head domain - the catalytic core - and a membrane F(1) domain - the membrane proton channel. These two domains are linked by a central stalk rotating inside the F(1) region and a stationary peripheral stalk. During catalysis, ATP synthesis in the catalytic domain of F(1) is coupled via a rotary mechanism of the central stalk subunits to proton translocation. In vivo, can only synthesize ATP although its ATP hydrolase activity can be activated artificially in vitro. Part of the complex F(0) domain. The sequence is that of ATP synthase F(0) complex subunit 8 from Anas platyrhynchos (Mallard).